Reading from the N-terminus, the 276-residue chain is Large ribosomal subunit protein uL2 (276 aa).

The disordered stretch occupies residues 211 to 276; it reads RNRHRGIRPQ…KLIISRRKGK (66 aa). Residues 230–240 are compositionally biased toward basic and acidic residues; it reads DHPHGGGEGKK.

This sequence belongs to the universal ribosomal protein uL2 family. As to quaternary structure, part of the 50S ribosomal subunit. Forms a bridge to the 30S subunit in the 70S ribosome.

Functionally, one of the primary rRNA binding proteins. Required for association of the 30S and 50S subunits to form the 70S ribosome, for tRNA binding and peptide bond formation. It has been suggested to have peptidyltransferase activity; this is somewhat controversial. Makes several contacts with the 16S rRNA in the 70S ribosome. In Campylobacter jejuni subsp. doylei (strain ATCC BAA-1458 / RM4099 / 269.97), this protein is Large ribosomal subunit protein uL2.